The following is a 1358-amino-acid chain: DNA-directed RNA polymerase subunit beta (1358 aa).

Belongs to the RNA polymerase beta chain family. The RNAP catalytic core consists of 2 alpha, 1 beta, 1 beta' and 1 omega subunit. When a sigma factor is associated with the core the holoenzyme is formed, which can initiate transcription.

It catalyses the reaction RNA(n) + a ribonucleoside 5'-triphosphate = RNA(n+1) + diphosphate. In terms of biological role, DNA-dependent RNA polymerase catalyzes the transcription of DNA into RNA using the four ribonucleoside triphosphates as substrates. The polypeptide is DNA-directed RNA polymerase subunit beta (Francisella tularensis subsp. holarctica (strain LVS)).